The sequence spans 119 residues: Large ribosomal subunit protein bL20 (119 aa).

Belongs to the bacterial ribosomal protein bL20 family.

Binds directly to 23S ribosomal RNA and is necessary for the in vitro assembly process of the 50S ribosomal subunit. It is not involved in the protein synthesizing functions of that subunit. The polypeptide is Large ribosomal subunit protein bL20 (Streptococcus thermophilus (strain ATCC BAA-491 / LMD-9)).